Here is a 1947-residue protein sequence, read N- to C-terminus: Sodium channel protein type 3 subunit alpha (1947 aa).

Over 1–128 (MAQALLVPPG…KIAIKILVHS (128 aa)) the chain is Cytoplasmic. The interval 28-60 (RAAEEKAKKPKKEQDIDDENKPKPNSDLEAGKN) is disordered. Residues 46-57 (ENKPKPNSDLEA) show a composition bias toward basic and acidic residues. The I repeat unit spans residues 110-455 (ILTPLNPVRK…QQMLEQLKKQ (346 aa)). Residues 129-146 (LFSMLIMCTILTNCVFMT) traverse the membrane as a helical segment. The Extracellular segment spans residues 147–152 (LSNPPD). A helical membrane pass occupies residues 153–174 (WTKNVEYTFTGIYTFESLIKIL). At 175–188 (ARGFCLEDFTFLRD) the chain is on the cytoplasmic side. Residues 189–206 (PWNWLDFSVIVMAYVTEF) traverse the membrane as a helical segment. Over 207 to 213 (VDLGNVS) the chain is Extracellular. N-linked (GlcNAc...) asparagine glycosylation occurs at Asn211. A helical transmembrane segment spans residues 214 to 235 (ALRTFRVLRALKTISVIPGLKT). Topologically, residues 236 to 249 (IVGALIQSVKKLSD) are cytoplasmic. Residues 250–269 (VMILTVFCLSVFALIGLQLF) traverse the membrane as a helical segment. At 270–369 (MGNLRNKCLQ…NYGYTSFDTF (100 aa)) the chain is on the extracellular side. 5 N-linked (GlcNAc...) asparagine glycosylation sites follow: Asn290, Asn296, Asn302, Asn307, and Asn339. Residues 370 to 386 (SWAFLSLFRLMTQDYWE) constitute an intramembrane region (pore-forming). Residues 387–397 (NLYQLTLRAAG) lie on the Extracellular side of the membrane. The chain crosses the membrane as a helical span at residues 398–424 (KTYMIFFVLVIFLGSFYLVNLILAVVA). Over 425 to 712 (MAYEEQNQAT…LVNLIVMDPF (288 aa)) the chain is Cytoplasmic. Ser484, Ser485, and Ser486 each carry phosphoserine. 2 disordered regions span residues 493–529 (SKSA…SESE) and 587–632 (VGSE…ETEV). Residues 500–509 (RNRRKKRRQR) show a composition bias toward basic residues. Composition is skewed to basic and acidic residues over residues 510-529 (EHLE…SESE) and 596-622 (DEHS…ERRN). Residues 693-965 (CCDSWLKVKH…QIAVGRMQKG (273 aa)) form an II repeat. The chain crosses the membrane as a helical span at residues 713-730 (VDLAITICIVLNTLFMAM). Residues 731–738 (EHYPMTEQ) lie on the Extracellular side of the membrane. A helical membrane pass occupies residues 739 to 763 (FSSVLTVGNLVFTGIFTAEMVLKII). Residues 764 to 773 (AMDPYYYFQE) are Cytoplasmic-facing. Residues 774–793 (GWNIFDGIIVSLSLMELGLA) form a helical membrane-spanning segment. Residues 794-797 (NVEG) lie on the Extracellular side of the membrane. A helical membrane pass occupies residues 798–816 (LSVLRSFRLLRVFKLAKSW). The Cytoplasmic portion of the chain corresponds to 817-834 (PTLNMLIKIIGNSVGALG). A helical transmembrane segment spans residues 835–855 (NLTLVLAIIVFIFAVVGMQLF). The Extracellular portion of the chain corresponds to 856–880 (GKSYKECVCKINEDCKLPRWHMNDF). Cys864 and Cys870 are disulfide-bonded. The segment at residues 881–896 (FHSFLIVFRVLCGEWI) is an intramembrane region (pore-forming). Residues 897-907 (ETMWDCMEVAG) are Extracellular-facing. A disulfide bridge connects residues Cys902 and Cys911. A helical transmembrane segment spans residues 908 to 934 (QTMCLIVFMLVMVIGNLVVLNLFLALL). Residues 935–1157 (LSSFSSDNLA…RKTCYSIVEH (223 aa)) lie on the Cytoplasmic side of the membrane. The tract at residues 1070–1113 (EEFSSESELEESKEKLNATSSSEGSTVDVAPPREGEQAEIEPEE) is disordered. One copy of the III repeat lies at 1140 to 1451 (KGKIWWNLRK…KKYYNAMKKL (312 aa)). A helical transmembrane segment spans residues 1158–1178 (NWFETFIVFMILLSSGALAFE). The Extracellular portion of the chain corresponds to 1179–1190 (DIYIEQRKTIKT). A helical membrane pass occupies residues 1191-1212 (MLEYADKVFTYIFILEMLLKWV). Residues 1213–1218 (AYGFQT) lie on the Cytoplasmic side of the membrane. The chain crosses the membrane as a helical span at residues 1219–1244 (YFTNAWCWLDFLIVDVSLVSLVANAL). The Extracellular portion of the chain corresponds to 1245-1253 (GYSELGAIK). Residues 1254-1272 (SLRTLRALRPLRALSRFEG) traverse the membrane as a helical segment. Topologically, residues 1273–1285 (MRVVVNALVGAIP) are cytoplasmic. A helical transmembrane segment spans residues 1286–1308 (SIMNVLLVCLIFWLIFSIMGVNL). Over 1309–1354 (FAGKFYHCVNMTTGSMFDMSEVNNFSDCQALGKQARWKNVKVNFDN) the chain is Extracellular. Cysteines 1316 and 1336 form a disulfide. Asn1318 and Asn1332 each carry an N-linked (GlcNAc...) asparagine glycan. Positions 1355 to 1371 (VGAGYLALLQVATFKGW) form an intramembrane region, pore-forming. Residues 1372–1394 (MDIMYAAVDSRDVKLQPVYEENL) are Extracellular-facing. Residues 1395 to 1420 (YMYLYFVIFIIFGSFFTLNLFIGVII) form a helical membrane-spanning segment. Over 1421-1478 (DNFNQQKKKFGGQDIFMTEEQKKYYNAMKKLGSKKPQKPIPRPANKFQGMVFDFVTRQ) the chain is Cytoplasmic. Ser1453 carries the phosphoserine modification. Residues 1460 to 1758 (IPRPANKFQG…WEKFDPDATQ (299 aa)) form an IV repeat. A helical membrane pass occupies residues 1479–1497 (VFDISIMILICLNMVTMMV). At 1498–1505 (ETDDQSKY) the chain is on the extracellular side. A helical transmembrane segment spans residues 1506–1529 (MTLVLSRINLVFIVLFTGEFLLKL). The Cytoplasmic portion of the chain corresponds to 1530-1539 (ISLRYYYFTI). Residues 1540–1557 (GWNIFDFVVVILSIVGMF) traverse the membrane as a helical segment. The Extracellular segment spans residues 1558–1569 (LAELIEKYFVSP). Residues 1570-1592 (TLFRVIRLARIGRILRLIKGAKG) form a helical membrane-spanning segment. Residues 1593-1605 (IRTLLFALMMSLP) are Cytoplasmic-facing. Residues 1606–1629 (ALFNIGLLLFLVMFIYAIFGMSNF) traverse the membrane as a helical segment. Topologically, residues 1630-1651 (AYVKKEAGIDDMFNFETFGNSM) are extracellular. The pore-forming intramembrane region spans 1652 to 1664 (ICLFQITTSAGWD). The Extracellular portion of the chain corresponds to 1665 to 1696 (GLLAPILNSAPPDCDPDAIHPGSSVKGDCGNP). Residues 1697 to 1722 (SVGIFFFVSYIIISFLVVVNMYIAVI) form a helical membrane-spanning segment. At 1723–1947 (LENFSVATEE…PEKESKGKEV (225 aa)) the chain is on the cytoplasmic side. The region spanning 1852-1881 (EEVSAAIIQRNYRCYLLKQRLKNISNTYDK) is the IQ domain. Positions 1901–1947 (LNGNSTPEKTDGSSSTTSPPSYDSVTKPDKEKFEKDKPEKESKGKEV) are disordered. A compositionally biased stretch (basic and acidic residues) spans 1926-1947 (TKPDKEKFEKDKPEKESKGKEV).

Belongs to the sodium channel (TC 1.A.1.10) family. Nav1.3/SCN3A subfamily. Heterooligomer of an alpha subunit, SCN3A, and 1 to 3 regulatory beta subunits including SCN1B and SCN2B; disulfide-linked with some beta subunits like SCN2B. Interacts with NEDD4L; could regulate expression of SCN3A at the plasma membrane through ubiquitination-regulated endocytosis. Post-translationally, may be ubiquitinated by NEDD4L; which would promote its endocytosis. Phosphorylation at Ser-1453 in a highly conserved cytoplasmic loop slows inactivation of the channel and reduces peak sodium currents. In terms of tissue distribution, expressed in enterochromaffin cells in both colon and small bowel (at protein level). Expressed in pancreatic alpha and beta cells.

It localises to the cell membrane. Its subcellular location is the basal cell membrane. The enzyme catalyses Na(+)(in) = Na(+)(out). Pore-forming subunit of Nav1.3, a voltage-gated sodium (Nav) channel that directly mediates the depolarizing phase of action potentials in excitable membranes. Navs, also called VGSCs (voltage-gated sodium channels) or VDSCs (voltage-dependent sodium channels), operate by switching between closed and open conformations depending on the voltage difference across the membrane. In the open conformation they allow Na(+) ions to selectively pass through the pore, along their electrochemical gradient. The influx of Na+ ions provokes membrane depolarization, initiating the propagation of electrical signals throughout cells and tissues. In some secretory cell types, it also participates in cell excitability through membrane depolarization and regulates cells responsiveness to stimuli triggering secretion. For instance, it controls the release of serotonin/5-hydroxytryptamine by enterochromaffin cells and is required for both glucagon- and glucose-induced insulin secretion in pancreatic endocrine cells. The protein is Sodium channel protein type 3 subunit alpha of Mus musculus (Mouse).